The following is a 270-amino-acid chain: Diaminopimelate epimerase (270 aa).

Substrate contacts are provided by asparagine 15, glutamine 49, and asparagine 66. Residue cysteine 75 is the Proton donor of the active site. Residues 76–77, asparagine 155, asparagine 187, and 204–205 contribute to the substrate site; these read GN and ER. Cysteine 213 functions as the Proton acceptor in the catalytic mechanism. 214 to 215 serves as a coordination point for substrate; the sequence is GS.

This sequence belongs to the diaminopimelate epimerase family. As to quaternary structure, homodimer.

It localises to the cytoplasm. It carries out the reaction (2S,6S)-2,6-diaminopimelate = meso-2,6-diaminopimelate. Its pathway is amino-acid biosynthesis; L-lysine biosynthesis via DAP pathway; DL-2,6-diaminopimelate from LL-2,6-diaminopimelate: step 1/1. Catalyzes the stereoinversion of LL-2,6-diaminopimelate (L,L-DAP) to meso-diaminopimelate (meso-DAP), a precursor of L-lysine and an essential component of the bacterial peptidoglycan. The protein is Diaminopimelate epimerase of Rickettsia felis (strain ATCC VR-1525 / URRWXCal2) (Rickettsia azadi).